The chain runs to 483 residues: Regulatory protein ViaA (483 aa).

The protein belongs to the ViaA family. Homodimer. Interacts with RavA.

It localises to the cytoplasm. Component of the RavA-ViaA chaperone complex, which may act on the membrane to optimize the function of some of the respiratory chains. ViaA stimulates the ATPase activity of RavA. The sequence is that of Regulatory protein ViaA from Enterobacter sp. (strain 638).